We begin with the raw amino-acid sequence, 313 residues long: Olfactory receptor 4M2 (313 aa).

At 1 to 25 the chain is on the extracellular side; that stretch reads METANYTKVTEFVLTGLSQTPEVQL. N-linked (GlcNAc...) asparagine glycosylation is present at N5. Residues 26–49 traverse the membrane as a helical segment; sequence VLFVIFLSFYLFILPGNILIICTI. Residues 50–57 are Cytoplasmic-facing; that stretch reads SLDPHLTS. A helical transmembrane segment spans residues 58–79; the sequence is PMYFLLANLAFLDIWYSSITAP. The Extracellular portion of the chain corresponds to 80-100; it reads EMLIDFFVERKIISFDGCIAQ. A disulfide bond links C97 and C189. A helical membrane pass occupies residues 101–120; that stretch reads LFFLHFAGASEMFLLTVMAF. The Cytoplasmic segment spans residues 121-139; it reads DLYTAICRPLHYATIMNQR. Residues 140–158 form a helical membrane-spanning segment; sequence LCCILVALSWRGGFIHSII. The Extracellular segment spans residues 159–195; that stretch reads QVALIVRLPFCGPNELDSYFCDITQVVRIACANTFPE. A helical transmembrane segment spans residues 196 to 219; that stretch reads ELVMICSSGLISVVCLIALLMSYA. Residues 220 to 237 lie on the Cytoplasmic side of the membrane; sequence FLLALFKKLSGSGENTNR. The chain crosses the membrane as a helical span at residues 238–260; that stretch reads AMSTCYSHITIVVLMFGPSIYIY. The Extracellular portion of the chain corresponds to 261–271; sequence ARPFDSFSLDK. Residues 272–291 form a helical membrane-spanning segment; that stretch reads VVSVFNTLIFPLRNPIIYTL. At 292–313 the chain is on the cytoplasmic side; sequence RNKEVKAAMRKLVTKYILCKEK.

Belongs to the G-protein coupled receptor 1 family.

The protein localises to the cell membrane. Its function is as follows. Odorant receptor. The polypeptide is Olfactory receptor 4M2 (OR4M2) (Homo sapiens (Human)).